Consider the following 122-residue polypeptide: Large ribosomal subunit protein uL14 (122 aa).

This sequence belongs to the universal ribosomal protein uL14 family. In terms of assembly, part of the 50S ribosomal subunit. Forms a cluster with proteins L3 and L19. In the 70S ribosome, L14 and L19 interact and together make contacts with the 16S rRNA in bridges B5 and B8.

In terms of biological role, binds to 23S rRNA. Forms part of two intersubunit bridges in the 70S ribosome. The chain is Large ribosomal subunit protein uL14 from Dehalococcoides mccartyi (strain ATCC BAA-2100 / JCM 16839 / KCTC 5957 / BAV1).